The chain runs to 145 residues: MRTTFMAKANEVERKWYVVDAEGQTLGRLASEVASILRGKNKPTFTPHVDTGDHVIIINAEKIHLTGNKLNDKMYYRHTNHPGGLKQRTALVLRTNYPVQMLELAIKGMLPKGRLGRQVSKKLNVYAGAEHPHQAQKPEVYELRG.

It belongs to the universal ribosomal protein uL13 family. In terms of assembly, part of the 50S ribosomal subunit.

In terms of biological role, this protein is one of the early assembly proteins of the 50S ribosomal subunit, although it is not seen to bind rRNA by itself. It is important during the early stages of 50S assembly. This Bacillus cereus (strain ZK / E33L) protein is Large ribosomal subunit protein uL13.